A 107-amino-acid chain; its full sequence is Prokineticin-2 (107 aa).

Positions 1 to 26 are cleaved as a signal peptide; that stretch reads MEDPRCAPLLLLLLLPLLLTPPAGDA. Cystine bridges form between cysteine 33–cysteine 45, cysteine 39–cysteine 57, cysteine 44–cysteine 85, cysteine 67–cysteine 93, and cysteine 87–cysteine 103.

It belongs to the AVIT (prokineticin) family. Expressed at high levels in testis and at lower levels in brain, lung, ovary, spleen, thymus and uterus.

The protein resides in the secreted. Functionally, may function as an output molecule from the suprachiasmatic nucleus (SCN) that transmits behavioral circadian rhythm. May also function locally within the SCN to synchronize output. Potently contracts gastrointestinal (GI) smooth muscle. This chain is Prokineticin-2 (Prok2), found in Rattus norvegicus (Rat).